A 615-amino-acid chain; its full sequence is MPKLRSATSTEGRNMAGARALWRATGVKDNDFGKPIIAISNSFTQFVPGHVHLKDMGSLVAGAIEEAGGIAKEFNTIAVDDGIAMGHGGMLYSLPSRELIADSVEYMVNAHCADALVCISNCDKITPGMLMASLRLNIPVIFVSGGPMEAGKTKLSDKLIKLDLVDAMVAGADERVSDADSEQIERSACPTCGSCSGMFTANSMNCLTEALGLSLPGNGSMLATHADRRELFLEAGRRIMDLATRYYKHDDESALPRNIANFKAFENAMTLDIAMGGSSNTVLHLLAAAQEAEVDFTMDDIDRLSRLVPHLCKVAPATPKYHMEDVHRAGGVMGILGELDRANLLHNDAYHVAGENLAAVLAKYDIAQSDDAAVRKFFSAGPAGIPTTKAFSQDCRWDSVDDDRQQGCIRSREFAFSQEGGLAVLSGNVAVDGCIVKTAGVEVENHTFIGSARVYESQDDAVAGILGGEVVAGDVVVIRYEGPKGGPGMQEMLYPTSYLKSRGLGTQCALITDGRFSGGTSGLSIGHVSPEAAAGGTIGLVQTGDRIEIDIPARSIKLAISDVELAARRTAMEALGNDAWKPLGRVRHVSMALKAYALLATSADKGAVRDTSKLV.

A Mg(2+)-binding site is contributed by aspartate 81. A [2Fe-2S] cluster-binding site is contributed by cysteine 122. 2 residues coordinate Mg(2+): aspartate 123 and lysine 124. Residue lysine 124 is modified to N6-carboxylysine. Cysteine 195 provides a ligand contact to [2Fe-2S] cluster. Glutamate 491 provides a ligand contact to Mg(2+). Serine 517 acts as the Proton acceptor in catalysis.

The protein belongs to the IlvD/Edd family. Homodimer. Requires [2Fe-2S] cluster as cofactor. It depends on Mg(2+) as a cofactor.

It carries out the reaction (2R)-2,3-dihydroxy-3-methylbutanoate = 3-methyl-2-oxobutanoate + H2O. The catalysed reaction is (2R,3R)-2,3-dihydroxy-3-methylpentanoate = (S)-3-methyl-2-oxopentanoate + H2O. It participates in amino-acid biosynthesis; L-isoleucine biosynthesis; L-isoleucine from 2-oxobutanoate: step 3/4. The protein operates within amino-acid biosynthesis; L-valine biosynthesis; L-valine from pyruvate: step 3/4. Its function is as follows. Functions in the biosynthesis of branched-chain amino acids. Catalyzes the dehydration of (2R,3R)-2,3-dihydroxy-3-methylpentanoate (2,3-dihydroxy-3-methylvalerate) into 2-oxo-3-methylpentanoate (2-oxo-3-methylvalerate) and of (2R)-2,3-dihydroxy-3-methylbutanoate (2,3-dihydroxyisovalerate) into 2-oxo-3-methylbutanoate (2-oxoisovalerate), the penultimate precursor to L-isoleucine and L-valine, respectively. The protein is Dihydroxy-acid dehydratase of Shewanella pealeana (strain ATCC 700345 / ANG-SQ1).